The sequence spans 77 residues: Defensin-like protein (77 aa).

A signal peptide spans 1–30; that stretch reads MERGMRLFSSLVLVLLLVTATEMGPKVAEA. Disulfide bonds link cysteine 33–cysteine 77, cysteine 44–cysteine 64, cysteine 50–cysteine 71, and cysteine 54–cysteine 73.

The protein belongs to the DEFL family.

The protein resides in the secreted. The protein is Defensin-like protein of Nelumbo nucifera (Sacred lotus).